Consider the following 287-residue polypeptide: Iron-sulfur cluster carrier protein (287 aa).

47–54 (GKGGVGKS) contacts ATP.

This sequence belongs to the Mrp/NBP35 ATP-binding proteins family. Homodimer.

Functionally, binds and transfers iron-sulfur (Fe-S) clusters to target apoproteins. Can hydrolyze ATP. This Pseudomonas fragi protein is Iron-sulfur cluster carrier protein.